The sequence spans 500 residues: Lysine--tRNA ligase (500 aa).

2 residues coordinate Mg(2+): Glu-410 and Glu-417.

This sequence belongs to the class-II aminoacyl-tRNA synthetase family. As to quaternary structure, homodimer. The cofactor is Mg(2+).

The protein resides in the cytoplasm. The catalysed reaction is tRNA(Lys) + L-lysine + ATP = L-lysyl-tRNA(Lys) + AMP + diphosphate. In Mycoplasma mycoides subsp. mycoides SC (strain CCUG 32753 / NCTC 10114 / PG1), this protein is Lysine--tRNA ligase.